The primary structure comprises 304 residues: Putative S-adenosyl-L-methionine-dependent methyltransferase Mjls_1071 (304 aa).

S-adenosyl-L-methionine-binding positions include Asp-130 and 159–160; that span reads DL.

This sequence belongs to the UPF0677 family.

Functionally, exhibits S-adenosyl-L-methionine-dependent methyltransferase activity. The polypeptide is Putative S-adenosyl-L-methionine-dependent methyltransferase Mjls_1071 (Mycobacterium sp. (strain JLS)).